The sequence spans 70 residues: DNA-directed RNA polymerase subunit omega (70 aa).

Belongs to the RNA polymerase subunit omega family. The RNAP catalytic core consists of 2 alpha, 1 beta, 1 beta' and 1 omega subunit. When a sigma factor is associated with the core the holoenzyme is formed, which can initiate transcription.

It carries out the reaction RNA(n) + a ribonucleoside 5'-triphosphate = RNA(n+1) + diphosphate. In terms of biological role, promotes RNA polymerase assembly. Latches the N- and C-terminal regions of the beta' subunit thereby facilitating its interaction with the beta and alpha subunits. The protein is DNA-directed RNA polymerase subunit omega of Marinobacter nauticus (strain ATCC 700491 / DSM 11845 / VT8) (Marinobacter aquaeolei).